Consider the following 340-residue polypeptide: NAD kinase (340 aa).

Aspartate 66 (proton acceptor) is an active-site residue. NAD(+)-binding positions include 66–67 (DG), arginine 71, 141–142 (ND), lysine 152, aspartate 171, 182–187 (TAYAFS), and alanine 206. A disordered region spans residues 321–340 (AGVAGTEPDKPGERDGKAGS). The span at 327-340 (EPDKPGERDGKAGS) shows a compositional bias: basic and acidic residues.

It belongs to the NAD kinase family. A divalent metal cation is required as a cofactor.

The protein resides in the cytoplasm. It carries out the reaction NAD(+) + ATP = ADP + NADP(+) + H(+). In terms of biological role, involved in the regulation of the intracellular balance of NAD and NADP, and is a key enzyme in the biosynthesis of NADP. Catalyzes specifically the phosphorylation on 2'-hydroxyl of the adenosine moiety of NAD to yield NADP. In Bifidobacterium longum (strain DJO10A), this protein is NAD kinase.